The sequence spans 379 residues: Intracellular hyaluronan-binding protein 4.S (379 aa).

2 disordered regions span residues 52-260 (THRK…FSQE) and 332-379 (SLAR…PALA). A compositionally biased stretch (basic and acidic residues) spans 71-81 (GKKESQKDRKA). A compositionally biased stretch (polar residues) spans 107–116 (KVTQNENVDS). Basic and acidic residues-rich tracts occupy residues 118–133 (VKVD…REVR) and 139–158 (RSAE…DKQM). The segment covering 162–174 (GGRGGMRGRGRGG) has biased composition (gly residues). Positions 179–208 (TESDNLRGKREFDRHSGSDRARMRPEDKRG) are enriched in basic and acidic residues. Acidic residues-rich tracts occupy residues 232–241 (EQVETTETEA) and 368–379 (NPDDPEDFPALA).

It belongs to the SERBP1-HABP4 family. Associates with ribosomes; promoting ribosome stabilization. Interacts with eef2/eEF2; promoting ribosome stabilization.

The protein resides in the nucleus. The protein localises to the cytoplasm. Its subcellular location is the stress granule. It is found in the nucleolus. It localises to the nucleus speckle. The protein resides in the cajal body. Functionally, ribosome-binding protein that promotes ribosome hibernation, a process during which ribosomes are stabilized in an inactive state and preserved from proteasomal degradation. Acts via its association with eef2/eEF2 factor at the A-site of the ribosome, promoting ribosome stabilization in an inactive state compatible with storage. Plays a key role in ribosome hibernation in the mature egg by promoting ribosome stabilization. Ribosomes, which are produced in large quantities during oogenesis, are stored and translationally repressed in the egg and early embryo. The polypeptide is Intracellular hyaluronan-binding protein 4.S (Xenopus laevis (African clawed frog)).